The following is a 421-amino-acid chain: Zinc chaperone AztD (421 aa).

A signal peptide spans 1–29 (MMENIMKKRLLSTSISTLLLGLSVMPAFA). Zn(2+) contacts are provided by His-101, His-104, Asp-106, His-126, His-169, His-216, and His-405. The cysteines at positions 212 and 229 are disulfide-linked. A disordered region spans residues 399 to 421 (GGSGKVHGEHHDHEAHHHDDHAH). Over residues 404–421 (VHGEHHDHEAHHHDDHAH) the composition is skewed to basic and acidic residues. The N-terminal Zn(2+)-binding motif; binds a third Zn(2+) with low affinity motif lies at 408–419 (HHDHEAHHHDDH).

As to quaternary structure, monomer.

Its subcellular location is the periplasm. Acts as a zinc chaperone in the AztABCD zinc transport system. Directly transfers one zinc cation to the solute binding protein AztC; the transfer occurs without the formation of a stable interaction. Binds 3 Zn(2+), two with high affinity and one with low affinity, and transfers only Zn(2+) bound to site 2 to AztC. This chain is Zinc chaperone AztD, found in Citrobacter koseri (strain ATCC BAA-895 / CDC 4225-83 / SGSC4696).